Here is a 140-residue protein sequence, read N- to C-terminus: ATP synthase epsilon chain (140 aa).

It belongs to the ATPase epsilon chain family. In terms of assembly, F-type ATPases have 2 components, CF(1) - the catalytic core - and CF(0) - the membrane proton channel. CF(1) has five subunits: alpha(3), beta(3), gamma(1), delta(1), epsilon(1). CF(0) has three main subunits: a, b and c.

The protein resides in the cell inner membrane. Functionally, produces ATP from ADP in the presence of a proton gradient across the membrane. The protein is ATP synthase epsilon chain of Nitrosococcus oceani (strain ATCC 19707 / BCRC 17464 / JCM 30415 / NCIMB 11848 / C-107).